A 427-amino-acid chain; its full sequence is MPTPNIPSDFDFLDATLNLERLPVEELAELRKSEPIHWVDVPGGTGGFGDKGYWLVTKHADVKEVSRRSDVFGSSPDGAIPVWPQDMTREAVDLQRAVLLNMDAPQHTRLRKIISRGFTPRAIGRLEDELRSRAQKIAQTAAAQGAGDFVEQVSCELPLQAIAELLGVPQDDRDKLFRWSNEMTAGEDPEYADVDPAMSSFELISYAMKMAEERAVNPTEDIVTKLIEADIDGEKLSDDEFGFFVVMLAVAGNETTRNSITHGMIAFAQNPDQWELYKKERPETAADEIVRWATPVSAFQRTALEDVELGGVQIKKGQRVVMSYRSANFDEEVFEDPHTFNILRSPNPHVGFGGTGAHYCIGANLARMTINLIFNAIADNMPDLKPIGAPERLKSGWLNGIKHWQVDYTGAGKASVSGAPGTCPVAH.

Cys360 is a binding site for heme.

Belongs to the cytochrome P450 family. It depends on heme as a cofactor.

It catalyses the reaction cholest-4-en-3-one + 6 reduced [2Fe-2S]-[ferredoxin] + 3 O2 + 5 H(+) = (25S)-3-oxocholest-4-en-26-oate + 6 oxidized [2Fe-2S]-[ferredoxin] + 4 H2O. It functions in the pathway steroid metabolism; cholesterol degradation. Its function is as follows. Involved in the utilization of cholesterol as the sole carbon and energy source by degrading the side chain. Primarily catalyzes the sequential oxidation of the terminal methyl of cholest-4-en-3-one into (25S)-26-hydroxycholest-4-en-3-one (alcohol), (25S)-26-oxocholest-4-en-3-one (aldehyde), to finally yield the carboxylic acid (25S)-3-oxocholest-4-en-26-oate. Also able to sequentially oxidize cholesterol itself, not only cholest-4-en-3-one. The chain is Steroid C26-monooxygenase from Mycolicibacterium smegmatis (strain ATCC 700084 / mc(2)155) (Mycobacterium smegmatis).